The chain runs to 129 residues: uncharacterized protein (129 aa).

Residues 33–50 (MGGNVMWFIALLFALLIA) form a helical membrane-spanning segment.

Its subcellular location is the membrane. This is an uncharacterized protein from Saccharomyces cerevisiae (strain ATCC 204508 / S288c) (Baker's yeast).